A 127-amino-acid chain; its full sequence is Thioredoxin domain-containing protein 8 (127 aa).

One can recognise a Thioredoxin domain in the interval Val2 to Met127. Cysteines 32 and 35 form a disulfide.

It belongs to the thioredoxin family. Testis-specific. Expressed in spermatozoa, sperm tail, elongated and round spermatids.

The protein resides in the cytoplasm. It is found in the golgi apparatus. Its function is as follows. May be required for post-translational modifications of proteins required for acrosomal biogenesis. May act by reducing disulfide bonds within the sperm. The polypeptide is Thioredoxin domain-containing protein 8 (Txndc8) (Rattus norvegicus (Rat)).